Consider the following 437-residue polypeptide: Dolichyl-diphosphooligosaccharide--protein glycosyltransferase 48 kDa subunit (437 aa).

Residues 1-24 (MASLRVSVLLVAASCLLLGSGLRA) form the signal peptide. The Lumenal portion of the chain corresponds to 25-407 (GPRTLVLLEN…QYERFIPSAY (383 aa)). Residues 408–428 (PYYASAFSVMFGLFIFSIVFL) traverse the membrane as a helical segment. The Cytoplasmic portion of the chain corresponds to 429 to 437 (HMKEKEKSD).

The protein belongs to the DDOST 48 kDa subunit family. Component of the oligosaccharyltransferase (OST) complex.

It localises to the endoplasmic reticulum membrane. It functions in the pathway protein modification; protein glycosylation. Its function is as follows. Subunit of the oligosaccharyl transferase (OST) complex that catalyzes the initial transfer of a defined glycan (Glc(3)Man(9)GlcNAc(2) in eukaryotes) from the lipid carrier dolichol-pyrophosphate to an asparagine residue within an Asn-X-Ser/Thr consensus motif in nascent polypeptide chains, the first step in protein N-glycosylation. N-glycosylation occurs cotranslationally and the complex associates with the Sec61 complex at the channel-forming translocon complex that mediates protein translocation across the endoplasmic reticulum (ER). All subunits are required for a maximal enzyme activity. Required for the assembly of both SST3A- and SS3B-containing OST complexes. This Xenopus tropicalis (Western clawed frog) protein is Dolichyl-diphosphooligosaccharide--protein glycosyltransferase 48 kDa subunit.